The chain runs to 177 residues: Probetacellulin (177 aa).

Positions 1-31 (MDPTAPGSSVSSLPLLLVLALGLAILHCVVA) are cleaved as a signal peptide. Residues 32–118 (DGNTTRTPET…LFYLQQDRGQ (87 aa)) lie on the Extracellular side of the membrane. Residues N34, N42, and N52 are each glycosylated (N-linked (GlcNAc...) asparagine). Positions 65 to 105 (HFSRCPKQYKHYCIHGRCRFVVDEQTPSCICEKGYFGARCE) constitute an EGF-like domain. 3 disulfide bridges follow: C69–C82, C77–C93, and C95–C104. The propeptide at 112–177 (LQQDRGQILV…SEDIQETNIA (66 aa)) is removed in mature form. Residues 119–139 (ILVVCLIVVMVVFIILVIGVC) traverse the membrane as a helical segment. Residues 140 to 177 (TCCHPLRKHRKKKKEEKMETLDKDKTPISEDIQETNIA) lie on the Cytoplasmic side of the membrane. Residues 153–177 (KEEKMETLDKDKTPISEDIQETNIA) are disordered. A compositionally biased stretch (basic and acidic residues) spans 154–167 (EEKMETLDKDKTPI).

In terms of assembly, monomer. Interacts with EGFR and ERBB4. Found in several mouse tissues including kidney, uterus and liver, as well as in beta tumor cell line and MCF-7 cells. It is not detected in the brain.

It localises to the secreted. The protein localises to the extracellular space. Its subcellular location is the cell membrane. Growth factor that binds to EGFR, ERBB4 and other EGF receptor family members. Potent mitogen for retinal pigment epithelial cells and vascular smooth muscle cells. This is Probetacellulin (Btc) from Mus musculus (Mouse).